Consider the following 293-residue polypeptide: ATP synthase gamma chain (293 aa).

The protein belongs to the ATPase gamma chain family. As to quaternary structure, F-type ATPases have 2 components, CF(1) - the catalytic core - and CF(0) - the membrane proton channel. CF(1) has five subunits: alpha(3), beta(3), gamma(1), delta(1), epsilon(1). CF(0) has three main subunits: a, b and c.

Its subcellular location is the cell inner membrane. Functionally, produces ATP from ADP in the presence of a proton gradient across the membrane. The gamma chain is believed to be important in regulating ATPase activity and the flow of protons through the CF(0) complex. The sequence is that of ATP synthase gamma chain from Psychrobacter cryohalolentis (strain ATCC BAA-1226 / DSM 17306 / VKM B-2378 / K5).